Here is a 29-residue protein sequence, read N- to C-terminus: Galanin (29 aa).

The residue at position 29 (alanine 29) is an Alanine amide.

Belongs to the galanin family.

Its subcellular location is the secreted. In terms of biological role, contracts smooth muscle of the gastrointestinal and genitourinary tract, regulates growth hormone release, modulates insulin release, and may be involved in the control of adrenal secretion. This chain is Galanin (GAL), found in Alligator mississippiensis (American alligator).